The following is a 158-amino-acid chain: uncharacterized protein (158 aa).

It belongs to the SixA phosphatase family.

This is an uncharacterized protein from Mycobacterium tuberculosis (strain CDC 1551 / Oshkosh).